Reading from the N-terminus, the 492-residue chain is Bifunctional purine biosynthesis protein PurH (492 aa).

The 144-residue stretch at 1 to 144 folds into the MGS-like domain; it reads MKKAILSVSN…KNYKHVTTIV (144 aa).

This sequence belongs to the PurH family.

The catalysed reaction is (6R)-10-formyltetrahydrofolate + 5-amino-1-(5-phospho-beta-D-ribosyl)imidazole-4-carboxamide = 5-formamido-1-(5-phospho-D-ribosyl)imidazole-4-carboxamide + (6S)-5,6,7,8-tetrahydrofolate. It catalyses the reaction IMP + H2O = 5-formamido-1-(5-phospho-D-ribosyl)imidazole-4-carboxamide. The protein operates within purine metabolism; IMP biosynthesis via de novo pathway; 5-formamido-1-(5-phospho-D-ribosyl)imidazole-4-carboxamide from 5-amino-1-(5-phospho-D-ribosyl)imidazole-4-carboxamide (10-formyl THF route): step 1/1. It participates in purine metabolism; IMP biosynthesis via de novo pathway; IMP from 5-formamido-1-(5-phospho-D-ribosyl)imidazole-4-carboxamide: step 1/1. The polypeptide is Bifunctional purine biosynthesis protein PurH (Staphylococcus aureus (strain USA300)).